The following is a 558-amino-acid chain: Dihydroxy-acid dehydratase (558 aa).

Position 48 (C48) interacts with [2Fe-2S] cluster. D80 is a binding site for Mg(2+). C121 contributes to the [2Fe-2S] cluster binding site. Residues D122 and K123 each contribute to the Mg(2+) site. At K123 the chain carries N6-carboxylysine. C193 serves as a coordination point for [2Fe-2S] cluster. Residue E445 participates in Mg(2+) binding. The Proton acceptor role is filled by S471.

The protein belongs to the IlvD/Edd family. In terms of assembly, homodimer. It depends on [2Fe-2S] cluster as a cofactor. The cofactor is Mg(2+).

It catalyses the reaction (2R)-2,3-dihydroxy-3-methylbutanoate = 3-methyl-2-oxobutanoate + H2O. The catalysed reaction is (2R,3R)-2,3-dihydroxy-3-methylpentanoate = (S)-3-methyl-2-oxopentanoate + H2O. Its pathway is amino-acid biosynthesis; L-isoleucine biosynthesis; L-isoleucine from 2-oxobutanoate: step 3/4. It participates in amino-acid biosynthesis; L-valine biosynthesis; L-valine from pyruvate: step 3/4. In terms of biological role, functions in the biosynthesis of branched-chain amino acids. Catalyzes the dehydration of (2R,3R)-2,3-dihydroxy-3-methylpentanoate (2,3-dihydroxy-3-methylvalerate) into 2-oxo-3-methylpentanoate (2-oxo-3-methylvalerate) and of (2R)-2,3-dihydroxy-3-methylbutanoate (2,3-dihydroxyisovalerate) into 2-oxo-3-methylbutanoate (2-oxoisovalerate), the penultimate precursor to L-isoleucine and L-valine, respectively. In Prochlorococcus marinus (strain SARG / CCMP1375 / SS120), this protein is Dihydroxy-acid dehydratase.